Here is a 209-residue protein sequence, read N- to C-terminus: Orotate phosphoribosyltransferase (209 aa).

Residues Arg96, Lys100, His102, and 122–130 (EDLISTGKS) contribute to the 5-phospho-alpha-D-ribose 1-diphosphate site. Orotate is bound at residue Ser126.

This sequence belongs to the purine/pyrimidine phosphoribosyltransferase family. PyrE subfamily. In terms of assembly, homodimer. Mg(2+) is required as a cofactor.

It carries out the reaction orotidine 5'-phosphate + diphosphate = orotate + 5-phospho-alpha-D-ribose 1-diphosphate. The protein operates within pyrimidine metabolism; UMP biosynthesis via de novo pathway; UMP from orotate: step 1/2. In terms of biological role, catalyzes the transfer of a ribosyl phosphate group from 5-phosphoribose 1-diphosphate to orotate, leading to the formation of orotidine monophosphate (OMP). This is Orotate phosphoribosyltransferase from Coxiella burnetii (strain RSA 493 / Nine Mile phase I).